Consider the following 338-residue polypeptide: UPF0284 protein PAE0372 (338 aa).

This sequence belongs to the UPF0284 family.

In Pyrobaculum aerophilum (strain ATCC 51768 / DSM 7523 / JCM 9630 / CIP 104966 / NBRC 100827 / IM2), this protein is UPF0284 protein PAE0372.